Reading from the N-terminus, the 243-residue chain is 7-cyano-7-deazaguanine synthase (243 aa).

18–28 (FSGGQDSATCL) is a binding site for ATP. Zn(2+) contacts are provided by Cys206, Cys221, Cys224, and Cys227.

It belongs to the QueC family. The cofactor is Zn(2+).

The enzyme catalyses 7-carboxy-7-deazaguanine + NH4(+) + ATP = 7-cyano-7-deazaguanine + ADP + phosphate + H2O + H(+). Its pathway is purine metabolism; 7-cyano-7-deazaguanine biosynthesis. Its function is as follows. Catalyzes the ATP-dependent conversion of 7-carboxy-7-deazaguanine (CDG) to 7-cyano-7-deazaguanine (preQ(0)). This is 7-cyano-7-deazaguanine synthase from Maricaulis maris (strain MCS10) (Caulobacter maris).